The chain runs to 944 residues: Protein translocase subunit SecA (944 aa).

ATP contacts are provided by residues Q90, 108–112, and D509; that span reads GEGKT. The tract at residues 533–565 is disordered; the sequence is VKPEEGHKPPVSPQRKTKSAGFKEEKNKNLSIS.

This sequence belongs to the SecA family. Monomer and homodimer. Part of the essential Sec protein translocation apparatus which comprises SecA, SecYEG and auxiliary proteins SecDF. Other proteins may also be involved.

It is found in the cell inner membrane. It localises to the cellular thylakoid membrane. The protein resides in the cytoplasm. It carries out the reaction ATP + H2O + cellular proteinSide 1 = ADP + phosphate + cellular proteinSide 2.. Functionally, part of the Sec protein translocase complex. Interacts with the SecYEG preprotein conducting channel. Has a central role in coupling the hydrolysis of ATP to the transfer of proteins into and across the cell membrane, serving as an ATP-driven molecular motor driving the stepwise translocation of polypeptide chains across the membrane. Its function is as follows. Probably participates in protein translocation into and across both the cytoplasmic and thylakoid membranes in cyanobacterial cells. In Prochlorococcus marinus (strain NATL1A), this protein is Protein translocase subunit SecA.